Here is a 309-residue protein sequence, read N- to C-terminus: Dihydroorotate dehydrogenase B (NAD(+)), catalytic subunit (309 aa).

FMN-binding positions include serine 21 and 45–46 (KA). Substrate is bound by residues lysine 45 and 69–73 (NAIGL). FMN is bound by residues asparagine 99 and asparagine 127. Asparagine 127 contributes to the substrate binding site. Cysteine 130 serves as the catalytic Nucleophile. Lysine 165 and isoleucine 191 together coordinate FMN. Position 192–193 (192–193 (NT)) interacts with substrate. FMN-binding positions include glycine 217, 243 to 244 (GG), and 265 to 266 (GT).

Belongs to the dihydroorotate dehydrogenase family. Type 1 subfamily. As to quaternary structure, heterotetramer of 2 PyrK and 2 PyrD type B subunits. Requires FMN as cofactor.

It is found in the cytoplasm. It carries out the reaction (S)-dihydroorotate + NAD(+) = orotate + NADH + H(+). It functions in the pathway pyrimidine metabolism; UMP biosynthesis via de novo pathway; orotate from (S)-dihydroorotate (NAD(+) route): step 1/1. Catalyzes the conversion of dihydroorotate to orotate with NAD(+) as electron acceptor. This chain is Dihydroorotate dehydrogenase B (NAD(+)), catalytic subunit (pyrD), found in Bacillus cereus (strain ATCC 14579 / DSM 31 / CCUG 7414 / JCM 2152 / NBRC 15305 / NCIMB 9373 / NCTC 2599 / NRRL B-3711).